An 81-amino-acid polypeptide reads, in one-letter code: Photosystem I iron-sulfur center (81 aa).

4Fe-4S ferredoxin-type domains are found at residues 1 to 31 (MSHS…MVPW) and 39 to 68 (IASS…IRVY). Residues Cys11, Cys14, Cys17, Cys21, Cys48, Cys51, Cys54, and Cys58 each contribute to the [4Fe-4S] cluster site.

As to quaternary structure, the cyanobacterial PSI reaction center is composed of one copy each of PsaA,B,C,D,E,F,I,J,K,L,M and X, and forms trimeric complexes. It depends on [4Fe-4S] cluster as a cofactor.

It is found in the cellular thylakoid membrane. The enzyme catalyses reduced [plastocyanin] + hnu + oxidized [2Fe-2S]-[ferredoxin] = oxidized [plastocyanin] + reduced [2Fe-2S]-[ferredoxin]. Apoprotein for the two 4Fe-4S centers FA and FB of photosystem I (PSI); essential for photochemical activity. FB is the terminal electron acceptor of PSI, donating electrons to ferredoxin. The C-terminus interacts with PsaA/B/D and helps assemble the protein into the PSI complex. Required for binding of PsaD and PsaE to PSI. PSI is a plastocyanin/cytochrome c6-ferredoxin oxidoreductase, converting photonic excitation into a charge separation, which transfers an electron from the donor P700 chlorophyll pair to the spectroscopically characterized acceptors A0, A1, FX, FA and FB in turn. This is Photosystem I iron-sulfur center from Microcystis aeruginosa (strain NIES-843 / IAM M-2473).